The chain runs to 270 residues: Proteasome subunit beta (270 aa).

The propeptide at 1 to 47 is removed in mature form; by autocatalysis; that stretch reads MSNRGRLGDAFLRPGSSSFLDFLSDHAPELLPGRSAAAGNAPLAPHA. Catalysis depends on T48, which acts as the Nucleophile.

The protein belongs to the peptidase T1B family. The 20S proteasome core is composed of 14 alpha and 14 beta subunits that assemble into four stacked heptameric rings, resulting in a barrel-shaped structure. The two inner rings, each composed of seven catalytic beta subunits, are sandwiched by two outer rings, each composed of seven alpha subunits. The catalytic chamber with the active sites is on the inside of the barrel. Has a gated structure, the ends of the cylinder being occluded by the N-termini of the alpha-subunits. Is capped by the proteasome-associated ATPase, ARC.

The protein localises to the cytoplasm. It carries out the reaction Cleavage of peptide bonds with very broad specificity.. It participates in protein degradation; proteasomal Pup-dependent pathway. Its activity is regulated as follows. The formation of the proteasomal ATPase ARC-20S proteasome complex, likely via the docking of the C-termini of ARC into the intersubunit pockets in the alpha-rings, may trigger opening of the gate for substrate entry. Interconversion between the open-gate and close-gate conformations leads to a dynamic regulation of the 20S proteasome proteolysis activity. Its function is as follows. Component of the proteasome core, a large protease complex with broad specificity involved in protein degradation. The chain is Proteasome subunit beta from Xylanimonas cellulosilytica (strain DSM 15894 / JCM 12276 / CECT 5975 / KCTC 9989 / LMG 20990 / NBRC 107835 / XIL07).